The chain runs to 562 residues: Transcriptional adapter 2A (562 aa).

The ZZ-type zinc-finger motif lies at lysine 91–glutamine 146. Residues cysteine 96, cysteine 99, cysteine 110, cysteine 113, cysteine 119, cysteine 122, histidine 132, and histidine 136 each contribute to the Zn(2+) site. The region spanning tryptophan 154–tyrosine 198 is the SANT domain. The SWIRM domain occupies cysteine 471–glycine 562.

Component of the Ada2a-containing (ATAC) complex composed of at least Ada2a, Atac1, Hcf, Ada3, Gcn5, Mocs2B, Charac-14, Atac3, Atac2, NC2beta and wds. Component of a complex that does not include Gcn5 or Ada3.

It localises to the nucleus. It is found in the chromosome. In terms of biological role, component of the histone acetyltransferase (HAT) complex ATAC; predominantly involved in acetylation of histone H4, including at Lys-6 (H4K5ac) and Lys-13 (H4K12ac). May be part of several different complexes, including Gcn5-independent complexes involved in RNA polymerase II-dependent transcription. This is Transcriptional adapter 2A from Drosophila melanogaster (Fruit fly).